The primary structure comprises 158 residues: 2-C-methyl-D-erythritol 2,4-cyclodiphosphate synthase (158 aa).

A divalent metal cation is bound by residues D9 and H11. 4-CDP-2-C-methyl-D-erythritol 2-phosphate-binding positions include 9–11 and 35–36; these read DVH and HS. H43 contributes to the a divalent metal cation binding site. 4-CDP-2-C-methyl-D-erythritol 2-phosphate-binding positions include 57–59, 62–66, 101–107, 133–136, F140, and R143; these read DIG, FPDTD, AQKPKML, and TTTE.

It belongs to the IspF family. In terms of assembly, homotrimer. The cofactor is a divalent metal cation.

The catalysed reaction is 4-CDP-2-C-methyl-D-erythritol 2-phosphate = 2-C-methyl-D-erythritol 2,4-cyclic diphosphate + CMP. The protein operates within isoprenoid biosynthesis; isopentenyl diphosphate biosynthesis via DXP pathway; isopentenyl diphosphate from 1-deoxy-D-xylulose 5-phosphate: step 4/6. Its function is as follows. Involved in the biosynthesis of isopentenyl diphosphate (IPP) and dimethylallyl diphosphate (DMAPP), two major building blocks of isoprenoid compounds. Catalyzes the conversion of 4-diphosphocytidyl-2-C-methyl-D-erythritol 2-phosphate (CDP-ME2P) to 2-C-methyl-D-erythritol 2,4-cyclodiphosphate (ME-CPP) with a corresponding release of cytidine 5-monophosphate (CMP). This Bacillus subtilis (strain 168) protein is 2-C-methyl-D-erythritol 2,4-cyclodiphosphate synthase.